The following is a 306-amino-acid chain: tRNA dimethylallyltransferase 1 (306 aa).

13 to 20 (GPTASGKT) lines the ATP pocket. 15–20 (TASGKT) is a binding site for substrate. The interval 38–41 (DSRQ) is interaction with substrate tRNA.

Belongs to the IPP transferase family. As to quaternary structure, monomer. Mg(2+) is required as a cofactor.

It catalyses the reaction adenosine(37) in tRNA + dimethylallyl diphosphate = N(6)-dimethylallyladenosine(37) in tRNA + diphosphate. Functionally, catalyzes the transfer of a dimethylallyl group onto the adenine at position 37 in tRNAs that read codons beginning with uridine, leading to the formation of N6-(dimethylallyl)adenosine (i(6)A). This chain is tRNA dimethylallyltransferase 1, found in Azobacteroides pseudotrichonymphae genomovar. CFP2.